Reading from the N-terminus, the 140-residue chain is Cystatin-C (140 aa).

Positions 1–20 are cleaved as a signal peptide; sequence MASPLRSLLFLLAVLAVAWA. Positions 75 to 79 match the Secondary area of contact motif; that stretch reads QLVAG. 2 cysteine pairs are disulfide-bonded: Cys-93-Cys-103 and Cys-117-Cys-137.

The protein belongs to the cystatin family.

The protein localises to the secreted. Functionally, as an inhibitor of cysteine proteinases, this protein is thought to serve an important physiological role as a local regulator of this enzyme activity. In Mus musculus (Mouse), this protein is Cystatin-C (Cst3).